We begin with the raw amino-acid sequence, 213 residues long: Adenylate kinase (213 aa).

Position 14 to 19 (14 to 19 (GSGKGT)) interacts with ATP. The NMP stretch occupies residues 34 to 63 (STGDLLRAIIREGTPNGLKAKAYLDKGAFV). Residues threonine 35, arginine 40, 61–63 (AFV), 89–92 (GFPR), and glutamine 96 each bind AMP. The tract at residues 129–162 (SRFLCPSCSRIYNTSQGHTECPDCHVPLIRRSDD) is LID. Arginine 130 serves as a coordination point for ATP. 2 residues coordinate Zn(2+): cysteine 133 and cysteine 136. 139 to 140 (IY) contributes to the ATP binding site. Residues cysteine 149 and cysteine 152 each coordinate Zn(2+). Arginine 159 and arginine 170 together coordinate AMP. Position 198 (asparagine 198) interacts with ATP.

This sequence belongs to the adenylate kinase family. Monomer.

The protein resides in the cytoplasm. The catalysed reaction is AMP + ATP = 2 ADP. It participates in purine metabolism; AMP biosynthesis via salvage pathway; AMP from ADP: step 1/1. Catalyzes the reversible transfer of the terminal phosphate group between ATP and AMP. Plays an important role in cellular energy homeostasis and in adenine nucleotide metabolism. In Chlamydia pneumoniae (Chlamydophila pneumoniae), this protein is Adenylate kinase.